A 273-amino-acid polypeptide reads, in one-letter code: Zinc finger protein 32 (273 aa).

3 consecutive C2H2-type zinc fingers follow at residues 77 to 99, 105 to 127, and 133 to 155; these read YECQ…ERIH, FECT…QRIH, and YQCK…ERLH. Zn(2+) is bound by residues C79, C82, H95, H99, C107, C110, H123, H127, S141, Q144, G157, Y161, F198, K201, L214, A218, C247, C250, H263, and C267. 2 C2H2-type zinc fingers span residues 161 to 183 and 189 to 211; these read YECA…RRVH and YRCD…IRVH. The C2H2-type 6 zinc-finger motif lies at 217–239; sequence YACTQCRKSFHTRGNCILHGKIH. The CCHC-type zinc-finger motif lies at 245-267; sequence YLCGQCGKSFTQRGSLAVHQRSC.

Belongs to the krueppel C2H2-type zinc-finger protein family.

Its subcellular location is the nucleus. Its function is as follows. May be involved in transcriptional regulation. The sequence is that of Zinc finger protein 32 (ZNF32) from Homo sapiens (Human).